A 423-amino-acid chain; its full sequence is Flotillin-1 (423 aa).

It belongs to the band 7/mec-2 family. Flotillin subfamily. Heterooligomeric complex of flotillin-1 and flotillin-2 and caveolin-1 and caveolin-2. As to expression, normally expressed in growing retinal exons of newly differentiated ganglion cells at the retinal margin. After optic nerve injury, expressed in all retinal ganglion cells and retinal axons. Also expressed in endothelial cells, spinal cord, larval and adult skin, muscle processes, thymus and gill macrophages.

The protein localises to the cell membrane. The protein resides in the endosome. It is found in the membrane. Its subcellular location is the caveola. It localises to the melanosome. The protein localises to the membrane raft. Its function is as follows. May act as a scaffolding protein within caveolar membranes, functionally participating in formation of caveolae or caveolae-like vesicles. The chain is Flotillin-1 (flot1) from Carassius auratus (Goldfish).